A 298-amino-acid chain; its full sequence is Lipoyl synthase (298 aa).

Residues Cys-40, Cys-45, Cys-51, Cys-67, Cys-71, Cys-74, and Ser-280 each contribute to the [4Fe-4S] cluster site. The Radical SAM core domain occupies 53–269; that stretch reads AVRRTATFMI…KEIAMQKGFS (217 aa).

The protein belongs to the radical SAM superfamily. Lipoyl synthase family. [4Fe-4S] cluster serves as cofactor.

The protein resides in the cytoplasm. The enzyme catalyses [[Fe-S] cluster scaffold protein carrying a second [4Fe-4S](2+) cluster] + N(6)-octanoyl-L-lysyl-[protein] + 2 oxidized [2Fe-2S]-[ferredoxin] + 2 S-adenosyl-L-methionine + 4 H(+) = [[Fe-S] cluster scaffold protein] + N(6)-[(R)-dihydrolipoyl]-L-lysyl-[protein] + 4 Fe(3+) + 2 hydrogen sulfide + 2 5'-deoxyadenosine + 2 L-methionine + 2 reduced [2Fe-2S]-[ferredoxin]. The protein operates within protein modification; protein lipoylation via endogenous pathway; protein N(6)-(lipoyl)lysine from octanoyl-[acyl-carrier-protein]. Functionally, catalyzes the radical-mediated insertion of two sulfur atoms into the C-6 and C-8 positions of the octanoyl moiety bound to the lipoyl domains of lipoate-dependent enzymes, thereby converting the octanoylated domains into lipoylated derivatives. This Bacillus subtilis (strain 168) protein is Lipoyl synthase.